Here is a 118-residue protein sequence, read N- to C-terminus: Small ribosomal subunit protein uS13 (118 aa).

The tract at residues 94-118 (GLPVHGQRTKTNARTRKGPAKSITR) is disordered.

The protein belongs to the universal ribosomal protein uS13 family. Part of the 30S ribosomal subunit. Forms a loose heterodimer with protein S19. Forms two bridges to the 50S subunit in the 70S ribosome.

Located at the top of the head of the 30S subunit, it contacts several helices of the 16S rRNA. In the 70S ribosome it contacts the 23S rRNA (bridge B1a) and protein L5 of the 50S subunit (bridge B1b), connecting the 2 subunits; these bridges are implicated in subunit movement. Contacts the tRNAs in the A and P-sites. This Acidithiobacillus ferrooxidans (strain ATCC 23270 / DSM 14882 / CIP 104768 / NCIMB 8455) (Ferrobacillus ferrooxidans (strain ATCC 23270)) protein is Small ribosomal subunit protein uS13.